The sequence spans 66 residues: UPF0370 protein YpfN (66 aa).

The helical transmembrane segment at 4-24 (LAKYWWILVLVFLVGVLLNVI) threads the bilayer. The interval 39–66 (KPELPPHRDFNDKWDDEDDWPKKDQPKK) is disordered. A compositionally biased stretch (basic and acidic residues) spans 42 to 51 (LPPHRDFNDK).

The protein belongs to the UPF0370 family.

It localises to the cell membrane. This chain is UPF0370 protein YpfN, found in Salmonella paratyphi C (strain RKS4594).